A 74-amino-acid chain; its full sequence is UPF0057 membrane protein At4g30660 (74 aa).

2 consecutive transmembrane segments (helical) span residues 4–24 (NCEI…GVCF) and 37–57 (LVLT…VIVF).

The protein belongs to the UPF0057 (PMP3) family.

It localises to the membrane. This chain is UPF0057 membrane protein At4g30660, found in Arabidopsis thaliana (Mouse-ear cress).